Consider the following 194-residue polypeptide: Imidazoleglycerol-phosphate dehydratase (194 aa).

Belongs to the imidazoleglycerol-phosphate dehydratase family.

It localises to the cytoplasm. It catalyses the reaction D-erythro-1-(imidazol-4-yl)glycerol 3-phosphate = 3-(imidazol-4-yl)-2-oxopropyl phosphate + H2O. Its pathway is amino-acid biosynthesis; L-histidine biosynthesis; L-histidine from 5-phospho-alpha-D-ribose 1-diphosphate: step 6/9. This Sulfurisphaera tokodaii (strain DSM 16993 / JCM 10545 / NBRC 100140 / 7) (Sulfolobus tokodaii) protein is Imidazoleglycerol-phosphate dehydratase.